The chain runs to 155 residues: 6,7-dimethyl-8-ribityllumazine synthase (155 aa).

5-amino-6-(D-ribitylamino)uracil is bound by residues Trp18, 52–54 (AFE), and 76–78 (LVV). Catalysis depends on Arg84, which acts as the Proton donor. Ser109 is a 5-amino-6-(D-ribitylamino)uracil binding site. His123 serves as a coordination point for (2S)-2-hydroxy-3-oxobutyl phosphate.

Belongs to the DMRL synthase family.

The catalysed reaction is (2S)-2-hydroxy-3-oxobutyl phosphate + 5-amino-6-(D-ribitylamino)uracil = 6,7-dimethyl-8-(1-D-ribityl)lumazine + phosphate + 2 H2O + H(+). It functions in the pathway cofactor biosynthesis; riboflavin biosynthesis; riboflavin from 2-hydroxy-3-oxobutyl phosphate and 5-amino-6-(D-ribitylamino)uracil: step 1/2. Its function is as follows. Catalyzes the formation of 6,7-dimethyl-8-ribityllumazine by condensation of 5-amino-6-(D-ribitylamino)uracil with 3,4-dihydroxy-2-butanone 4-phosphate. This is the penultimate step in the biosynthesis of riboflavin. This chain is 6,7-dimethyl-8-ribityllumazine synthase, found in Rhodococcus erythropolis (Arthrobacter picolinophilus).